A 427-amino-acid chain; its full sequence is Peptidase B (427 aa).

Positions 195 and 200 each coordinate Mn(2+). The active site involves lysine 207. The Mn(2+) site is built by aspartate 218, aspartate 277, and glutamate 279. Arginine 281 is an active-site residue.

Belongs to the peptidase M17 family. As to quaternary structure, homohexamer. It depends on Mn(2+) as a cofactor.

The protein resides in the cytoplasm. The catalysed reaction is Release of an N-terminal amino acid, Xaa, from a peptide or arylamide. Xaa is preferably Glu or Asp but may be other amino acids, including Leu, Met, His, Cys and Gln.. In terms of biological role, probably plays an important role in intracellular peptide degradation. This Escherichia coli (strain UTI89 / UPEC) protein is Peptidase B.